An 826-amino-acid polypeptide reads, in one-letter code: MGKKRTKGKSVPEKASSESTEPMCRHLRKGLEQGNLKKALVNVEWNICQDCKTDNKVKDKSEEEAEDPSVWLCLKCGHQGCGRDSQEQHALKHYTTPRSEPHYLVLSLDNWSVWCYKCDEEIKYCSSNRLGQVVDYVRKQAGRITSKPAEKNNGHIELENKKLEKESKNEQEREKSESMAKENIPLDSASQITVKGLSNLGNTCFFNAVMQNLSQTPVLRELLKEVKMSGTIVKIEPPDLALTEPLEVNLEPPGPLTLAMSQFLNEMQENKKRIVTPKELFSQVCKKATRFKGYQQQDSQELLRYLLDGMRAEEHQRVSKGILKAFGNSTEKLDEEVKNKVKDYEKKKAIPSFVDRIFGGELTSTIMCDDCRTVSLVHESFLDLSLPVLDDQSGKKNINDKNVKKTMEEEDKDSEEEKDDSYMKTRSDVPSGTSKHTQKKAKKQAKKQAKNQRRQQKIQERFLHFNEICTTNYTEDNDHEAETALPGEGEVDTEFNRGSQEELTQTELCANQKDVNGQEEMIESAADERKCPEHPEVKSVSTESDLGSLTSAPECPRDLNGAFLEERTSGELDITNGLKNLTLNAAVDPDEISIEILNDSHSPALKVYEVMNEDPETAFCTLANREAFSTDECSIQHCLYQFTRNEKLQDANKLLCEVCTRRQCNGPKANIKGERKHVYTNAKKQMLVSLAPPVLTLHLKRFQQAGFNLRKVNKHIKFPEILDLAPFCTLKCKNVAEESTRVLYSLYGVVEHSGTMRSGHYTAYAKERTASCHLSNLVLHGDIPQDCEMESTKGQWFHISDTHVQAVPITKVLNSQAYLLFYERIL.

Residues 1 to 23 (MGKKRTKGKSVPEKASSESTEPM) form a disordered region. The UBP-type zinc-finger motif lies at 22–141 (PMCRHLRKGL…QVVDYVRKQA (120 aa)). Residues cysteine 24, histidine 26, cysteine 48, cysteine 51, cysteine 73, cysteine 76, cysteine 81, histidine 89, histidine 93, histidine 102, cysteine 115, and cysteine 118 each contribute to the Zn(2+) site. Lysine 139 participates in a covalent cross-link: Glycyl lysine isopeptide (Lys-Gly) (interchain with G-Cter in SUMO2). The segment at 145 to 184 (TSKPAEKNNGHIELENKKLEKESKNEQEREKSESMAKENI) is disordered. Basic and acidic residues predominate over residues 148–180 (PAEKNNGHIELENKKLEKESKNEQEREKSESMA). Position 188 is a phosphoserine (serine 188). The USP domain occupies 195–825 (KGLSNLGNTC…QAYLLFYERI (631 aa)). Residue cysteine 204 is the Nucleophile of the active site. Basic and acidic residues predominate over residues 392-407 (QSGKKNINDKNVKKTM). Disordered regions lie at residues 392–456 (QSGK…RRQQ) and 526–553 (ADER…TSAP). Residues 408 to 419 (EEEDKDSEEEKD) are compositionally biased toward acidic residues. Serine 414 is modified (phosphoserine). Residues 436-456 (HTQKKAKKQAKKQAKNQRRQQ) are compositionally biased toward basic residues. Over residues 526-537 (ADERKCPEHPEV) the composition is skewed to basic and acidic residues. Polar residues predominate over residues 539 to 551 (SVSTESDLGSLTS). Histidine 760 (proton acceptor) is an active-site residue.

The protein belongs to the peptidase C19 family. USP16 subfamily. In terms of assembly, homotetramer. Associates with late pre-40S ribosomes. Interacts with CEP78; promoting deubiquitination of tektins. Post-translationally, phosphorylated at the onset of mitosis and dephosphorylated during the metaphase/anaphase transition. Phosphorylation by AURKB enhances the deubiquitinase activity.

It is found in the nucleus. It carries out the reaction Thiol-dependent hydrolysis of ester, thioester, amide, peptide and isopeptide bonds formed by the C-terminal Gly of ubiquitin (a 76-residue protein attached to proteins as an intracellular targeting signal).. Its function is as follows. Specifically deubiquitinates 'Lys-120' of histone H2A (H2AK119Ub), a specific tag for epigenetic transcriptional repression, thereby acting as a coactivator. Deubiquitination of histone H2A is a prerequisite for subsequent phosphorylation at 'Ser-11' of histone H3 (H3S10ph), and is required for chromosome segregation when cells enter into mitosis. In resting B- and T-lymphocytes, phosphorylation by AURKB leads to enhance its activity, thereby maintaining transcription in resting lymphocytes. Regulates Hox gene expression via histone H2A deubiquitination. Prefers nucleosomal substrates. Does not deubiquitinate histone H2B. Also deubiquitinates non-histone proteins, such as ribosomal protein RPS27A: deubiquitination of monoubiquitinated RPS27A promotes maturation of the 40S ribosomal subunit. Also mediates deubiquitination of tektin proteins (TEKT1, TEKT2, TEK3, TEKT4 and TEKT5), promoting their stability. This Rattus norvegicus (Rat) protein is Ubiquitin carboxyl-terminal hydrolase 16 (Usp16).